The chain runs to 672 residues: Rho GTPase-activating protein 40 (672 aa).

Residues 43-68 (GCSPGLSTGPTNLQQHPQKPRPADCS) are disordered. A compositionally biased stretch (polar residues) spans 47–59 (GLSTGPTNLQQHP). One can recognise a Rho-GAP domain in the interval 321-519 (VPLHSLLEAD…MMVQYQDLLW (199 aa)).

GTPase activator for the Rho-type GTPases by converting them to an inactive GDP-bound state. This chain is Rho GTPase-activating protein 40, found in Mus musculus (Mouse).